Here is a 347-residue protein sequence, read N- to C-terminus: Probable dual-specificity RNA methyltransferase RlmN (347 aa).

The Proton acceptor role is filled by Glu-94. The region spanning 100–319 (YPSRTIACIS…LDTLVKNGID (220 aa)) is the Radical SAM core domain. Cys-107 and Cys-334 are disulfide-bonded. The [4Fe-4S] cluster site is built by Cys-114, Cys-118, and Cys-121. S-adenosyl-L-methionine contacts are provided by residues 161–162 (GE), Ser-193, 216–218 (SLH), and Asn-292. The S-methylcysteine intermediate role is filled by Cys-334.

It belongs to the radical SAM superfamily. RlmN family. [4Fe-4S] cluster is required as a cofactor.

It localises to the cytoplasm. The catalysed reaction is adenosine(2503) in 23S rRNA + 2 reduced [2Fe-2S]-[ferredoxin] + 2 S-adenosyl-L-methionine = 2-methyladenosine(2503) in 23S rRNA + 5'-deoxyadenosine + L-methionine + 2 oxidized [2Fe-2S]-[ferredoxin] + S-adenosyl-L-homocysteine. The enzyme catalyses adenosine(37) in tRNA + 2 reduced [2Fe-2S]-[ferredoxin] + 2 S-adenosyl-L-methionine = 2-methyladenosine(37) in tRNA + 5'-deoxyadenosine + L-methionine + 2 oxidized [2Fe-2S]-[ferredoxin] + S-adenosyl-L-homocysteine. Functionally, specifically methylates position 2 of adenine 2503 in 23S rRNA and position 2 of adenine 37 in tRNAs. This is Probable dual-specificity RNA methyltransferase RlmN from Petrotoga mobilis (strain DSM 10674 / SJ95).